We begin with the raw amino-acid sequence, 1622 residues long: MGFEPLDWYCKPVPNGVWTKTVDYAFGAYTPCAIDSFVLGISHLVLLILCLYRLWLITKDHKVDKFCLRSKWFSYFLALLAAYATAEPLFRLVMRISVLDLDGAGFPPYEAFMLVLEAFAWGSALVMTVVETKTYIHELRWYVRFAVIYALVGDMVLLNLVLSVKEYYGSFKLYLYISEVAVQVAFGTLLFVYFPNLDPYPGYTPVGTENSEDYEYEELPGGENICPERHANLFDSIFFSWLNPLMTLGSKRPLTEKDVWHLDTWDKTETLMRSFQKSWDKELEKPKPWLLRALNNSLGGRFWWGGFWKIGNDCSQFVGPLLLNELLKSMQLNEPAWIGYIYAISIFVGVVLGVLCEAQYFQNVMRVGYRLRSALIAAVFRKSLRLTNEGRKKFQTGKITNLMTTDAESLQQICQSLHTMWSAPFRIIVALVLLYQQLGVASIIGALFLVLMFPIQTVIISKTQKLTKEGLQRTDKRIGLMNEVLAAMDTVKCYAWENSFQSKVQTVRDDELSWFRKAQLLSAFNMFILNSIPVLVTVVSFGVFSLLGGDLTPARAFTSLSLFSVLRFPLFMLPNIITQMVNANVSLNRLEEVLSTEERVLLPNPPIEPGQPAISIRNGYFSWDSKADRPTLSNINLDIPLGSLVAVVGSTGEGKTSLISAMLGELPARSDATVTLRGSVAYVPQVSWIFNATVRDNILFGAPFDQEKYERVIDVTALQHDLELLPGGDLTEIGERGVNISGGQKQRVSMARAVYSNSDVCILDDPLSALDAHVGQQVFEKCIKRELGQTTRVLVTNQLHFLSQVDKILLVHEGTVKEEGTYEELCHSGPLFQRLMENAGKVEDYSEENGEAEVDQTSVKPVENGNANNLQKDGIETKNSKEGNSVLVKREERETGVVSWKVLERYQNALGGAWVVMMLVICYVLTQVFRVSSSTWLSEWTDSGTPKTHGPLFYNIVYALLSFGQVSVTLINSYWLIMSSLYAAKKMHDAMLGSILRAPMVFFQTNPLGRIINRFAKDMGDIDRTVAVFVNMFMGSIAQLLSTVILIGIVSTLSLWAIMPLLVVFYGAYLYYQNTSREIKRMDSTTRSPVYAQFGEALNGLSSIRAYKAYDRMAEINGRSMDNNIRFTLVNMAANRWLGIRLEVLGGLMVWLTASLAVMQNGKAANQQAYASTMGLLLSYALSITSSLTAVLRLASLAENSLNSVERVGNYIEIPSEAPLVIENNRPPPGWPSSGSIKFEDVVLRYRPELPPVLHGVSFLISPMDKVGIVGRTGAGKSSLLNALFRIVELEKGRILIDECDIGRFGLMDLRKVLGIIPQAPVLFSGTVRFNLDPFSEHNDADLWESLERAHLKDTIRRNPLGLDAEVTEAGENFSVGQRQLLSLARALLRRSKILVLDEATAAVDVRTDVLIQKTIREEFKSCTMLIIAHRLNTIIDCDKVLVLDSGKVQEFSSPENLLSNGESSFSKMVQSTGTANAEYLRSITLENKRTREANGDDSQPLEGQRKWQASSRWAAAAQFALAVSLTSSHNDLQSLEIEDDNSILKKTKDAVVTLRSVLEGKHDKEIEDSLNQSDISRERWWPSLYKMVEGLAVMSRLARNRMQHPDYNLEGKSFDWDNVEM.

A run of 9 helical transmembrane segments spans residues 37-57 (FVLG…LWLI), 73-93 (FSYF…FRLV), 110-130 (EAFM…MTVV), 145-165 (FAVI…LSVK), 174-194 (YLYI…FVYF), 336-356 (AWIG…GVLC), 440-460 (VASI…TVII), 527-547 (FILN…FSLL), and 557-577 (FTSL…PNII). Residues 302–582 (FWWGGFWKIG…LPNIITQMVN (281 aa)) enclose the ABC transmembrane type-1 1 domain. The 225-residue stretch at 614–838 (ISIRNGYFSW…GPLFQRLMEN (225 aa)) folds into the ABC transporter 1 domain. An ATP-binding site is contributed by 649–656 (GSTGEGKT). Positions 852–876 (AEVDQTSVKPVENGNANNLQKDGIE) are disordered. Residues 855–871 (DQTSVKPVENGNANNLQ) are compositionally biased toward polar residues. 6 helical membrane passes run 909 to 929 (ALGG…TQVF), 951 to 971 (PLFY…VTLI), 1027 to 1049 (AVFV…LIGI), 1053 to 1072 (LSLW…YLYY), 1138 to 1158 (LGIR…SLAV), and 1172 to 1192 (STMG…TAVL). The ABC transmembrane type-1 2 domain occupies 916 to 1200 (VMMLVICYVL…VLRLASLAEN (285 aa)). Residues 1231–1246 (WPSSGSIKFEDVVLRY) are interaction with calmodulin and FKP42/TWD1. The 235-residue stretch at 1237 to 1471 (IKFEDVVLRY…GESSFSKMVQ (235 aa)) folds into the ABC transporter 2 domain. 1271 to 1278 (GRTGAGKS) is an ATP binding site.

This sequence belongs to the ABC transporter superfamily. ABCC family. Conjugate transporter (TC 3.A.1.208) subfamily. As to quaternary structure, interacts with calmodulin (CaM), PAS1 and FKBP42/TWD1. As to expression, ubiquitous, with higher levels in leaves and stems and lower levels in roots. Localized in the root apex, root hair tips and root epidermis.

The protein localises to the vacuole membrane. The enzyme catalyses ATP + H2O + xenobioticSide 1 = ADP + phosphate + xenobioticSide 2.. In terms of biological role, pump for glutathione S-conjugates. Mediates the transport of S-(2,4-dinitrophenyl)-glutathione (DNP-GS), GSSG, cyanidin 3-glucoside-GS (C3G-GS) and metolachlor-GS (MOC-GS). This Arabidopsis thaliana (Mouse-ear cress) protein is ABC transporter C family member 1 (ABCC1).